We begin with the raw amino-acid sequence, 160 residues long: Ribosome maturation factor RimP (160 aa).

Belongs to the RimP family.

The protein localises to the cytoplasm. Its function is as follows. Required for maturation of 30S ribosomal subunits. This is Ribosome maturation factor RimP from Symbiobacterium thermophilum (strain DSM 24528 / JCM 14929 / IAM 14863 / T).